We begin with the raw amino-acid sequence, 484 residues long: NADH-quinone oxidoreductase subunit N (484 aa).

14 helical membrane-spanning segments follow: residues 11–31, 42–62, 79–98, 113–133, 134–154, 167–187, 211–231, 248–268, 279–299, 313–333, 335–355, 378–398, 408–428, and 457–477; these read SLWIALPEIFLLSAIVIVLLI, VTYYLIQLSLFITGLLAFNLI, MASVFKVFMMAATMVAMVYS, FVLVLLSVLGMMVMVSGYSLL, TLYLGLEILSLSLYALIAIAR, FVLGAIASGLLLYGMSMIYGI, LIINFGLVFLVIGIAFKLGAV, VTLFISTVPKIAAFAMLVRIL, WSDLFMVLSILSIALGSVVAL, ISHVGFIMLGFVAGTPIGYGA, AFYMLVYVLMSLAAFGMIILL, FALMMLIIILSMAGVPPLVGF, VVSAGFITIAVIVVIFAVISA, and LVLSINAILILAVGLFPDFWM.

Belongs to the complex I subunit 2 family. As to quaternary structure, NDH-1 is composed of 14 different subunits. Subunits NuoA, H, J, K, L, M, N constitute the membrane sector of the complex.

It is found in the cell inner membrane. The catalysed reaction is a quinone + NADH + 5 H(+)(in) = a quinol + NAD(+) + 4 H(+)(out). NDH-1 shuttles electrons from NADH, via FMN and iron-sulfur (Fe-S) centers, to quinones in the respiratory chain. The immediate electron acceptor for the enzyme in this species is believed to be ubiquinone. Couples the redox reaction to proton translocation (for every two electrons transferred, four hydrogen ions are translocated across the cytoplasmic membrane), and thus conserves the redox energy in a proton gradient. This is NADH-quinone oxidoreductase subunit N from Ruthia magnifica subsp. Calyptogena magnifica.